The sequence spans 113 residues: Probable UPF0122 protein (113 aa).

It belongs to the UPF0122 family.

Its function is as follows. Might take part in the signal recognition particle (SRP) pathway. This is inferred from the conservation of its genetic proximity to ftsY/ffh. May be a regulatory protein. In Mycoplasma mycoides, this protein is Probable UPF0122 protein.